A 328-amino-acid chain; its full sequence is Malate dehydrogenase (328 aa).

Position 11–17 (11–17 (GAAGQIG)) interacts with NAD(+). Substrate is bound by residues Arg-94 and Arg-100. NAD(+) is bound by residues Asn-107, Gln-114, and 131 to 133 (VGN). Residues Asn-133 and Arg-164 each contribute to the substrate site. Residue His-189 is the Proton acceptor of the active site.

This sequence belongs to the LDH/MDH superfamily. MDH type 2 family.

It carries out the reaction (S)-malate + NAD(+) = oxaloacetate + NADH + H(+). Functionally, catalyzes the reversible oxidation of malate to oxaloacetate. The chain is Malate dehydrogenase from Xylella fastidiosa (strain Temecula1 / ATCC 700964).